Consider the following 920-residue polypeptide: KIN14B-interacting protein At4g14310 (920 aa).

Residues 1–10 (MSASTNRRRL) are compositionally biased toward basic residues. 2 disordered regions span residues 1–199 (MSAS…EKST) and 309–375 (IDGP…EKPS). The segment covering 35 to 54 (PISSKNSNPALQKSLSSKEN) has biased composition (polar residues). A compositionally biased stretch (low complexity) spans 90 to 105 (TRSTSSGLRGRSSSPS). Over residues 112–135 (SDLRKRNESRVIGEKGESGQDKKS) the composition is skewed to basic and acidic residues. Polar residues-rich tracts occupy residues 137 to 147 (LKSSGFKQGTS) and 166 to 184 (CPVN…NSIS). Residues 327–337 (LNKEELEDRLL) are compositionally biased toward basic and acidic residues. Over residues 345 to 355 (SRTQSKTSSHV) the composition is skewed to polar residues. Positions 357–374 (KGHDSVESNKAVNAEEKP) are enriched in basic and acidic residues. Positions 435-463 (TEILRANEALEEIDDEENREEMELEEIDD) form a coiled coil.

Interacts with KIN14B, CDKA-1, CKS1 and CKS2.

Its subcellular location is the cytoplasm. In terms of biological role, might be involved in division plane determination. The polypeptide is KIN14B-interacting protein At4g14310 (Arabidopsis thaliana (Mouse-ear cress)).